The primary structure comprises 138 residues: MAARLCCQLDSSRDVLLLRPLRGQPSGPSVSGTSAGSPSSAASAFSSGHQADIPVGRLPACFYSSAGPCCLGFTCADLRTMDSTVNFVPWHAKRQLGMMQKDFWTAYIRDQLLTLWEEGIIDPRLKLFVLGGCRHKYM.

Residues 20–43 (PLRGQPSGPSVSGTSAGSPSSAAS) form a disordered region. Positions 25-43 (PSGPSVSGTSAGSPSSAAS) are enriched in low complexity. The interval 68–113 (PCCLGFTCADLRTMDSTVNFVPWHAKRQLGMMQKDFWTAYIRDQLL) is mitochondrial targeting sequence.

The protein belongs to the orthohepadnavirus protein X family. May form homodimer. May interact with host CEBPA, CFLAR, CREB1, DDB1, E4F1, HBXIP, HSPD1/HSP60, NFKBIA, POLR2E and SMAD4. Interacts with host SMC5-SMC6 complex and induces its degradation. Interacts with host TRPC4AP; leading to prevent ubiquitination of TRPC4AP. Interacts with host PLSCR1; this interaction promotes ubiquitination and degradation of HBx and impairs HBx-mediated cell proliferation. Post-translationally, a fraction may be phosphorylated in insect cells and HepG2 cells, a human hepatoblastoma cell line. Phosphorylated in vitro by host protein kinase C or mitogen-activated protein kinase. N-acetylated in insect cells.

It localises to the host cytoplasm. Its subcellular location is the host nucleus. The protein resides in the host mitochondrion. Its function is as follows. Multifunctional protein that plays a role in silencing host antiviral defenses and promoting viral transcription. Does not seem to be essential for HBV infection. May be directly involved in development of cirrhosis and liver cancer (hepatocellular carcinoma). Most of cytosolic activities involve modulation of cytosolic calcium. The effect on apoptosis is controversial depending on the cell types in which the studies have been conducted. May induce apoptosis by localizing in mitochondria and causing loss of mitochondrial membrane potential. May also modulate apoptosis by binding host CFLAR, a key regulator of the death-inducing signaling complex (DISC). Promotes viral transcription by using the host E3 ubiquitin ligase DDB1 to target the SMC5-SMC6 complex to proteasomal degradation. This host complex would otherwise bind to viral episomal DNA, and prevents its transcription. Moderately stimulates transcription of many different viral and cellular transcription elements. Promoters and enhancers stimulated by HBx contain DNA binding sites for NF-kappa-B, AP-1, AP-2, c-EBP, ATF/CREB, or the calcium-activated factor NF-AT. The protein is Protein X of Ground squirrel hepatitis virus (strain 27) (GSHV).